The sequence spans 68 residues: uncharacterized protein (68 aa).

This is an uncharacterized protein from Bacillus subtilis (strain 168).